Reading from the N-terminus, the 72-residue chain is Translation initiation factor IF-1 (72 aa).

One can recognise an S1-like domain in the interval 1–72; the sequence is MAKEDTLEFP…TKGRINYRFK (72 aa).

Belongs to the IF-1 family. In terms of assembly, component of the 30S ribosomal translation pre-initiation complex which assembles on the 30S ribosome in the order IF-2 and IF-3, IF-1 and N-formylmethionyl-tRNA(fMet); mRNA recruitment can occur at any time during PIC assembly.

The protein resides in the cytoplasm. In terms of biological role, one of the essential components for the initiation of protein synthesis. Stabilizes the binding of IF-2 and IF-3 on the 30S subunit to which N-formylmethionyl-tRNA(fMet) subsequently binds. Helps modulate mRNA selection, yielding the 30S pre-initiation complex (PIC). Upon addition of the 50S ribosomal subunit IF-1, IF-2 and IF-3 are released leaving the mature 70S translation initiation complex. This chain is Translation initiation factor IF-1, found in Roseobacter denitrificans (strain ATCC 33942 / OCh 114) (Erythrobacter sp. (strain OCh 114)).